Reading from the N-terminus, the 545-residue chain is Chaperonin GroEL (545 aa).

ATP is bound by residues 29–32, lysine 50, 86–90, glycine 415, and aspartate 495; these read TLGP and DGTTT.

Belongs to the chaperonin (HSP60) family. Forms a cylinder of 14 subunits composed of two heptameric rings stacked back-to-back. Interacts with the co-chaperonin GroES.

The protein localises to the cytoplasm. It catalyses the reaction ATP + H2O + a folded polypeptide = ADP + phosphate + an unfolded polypeptide.. Functionally, together with its co-chaperonin GroES, plays an essential role in assisting protein folding. The GroEL-GroES system forms a nano-cage that allows encapsulation of the non-native substrate proteins and provides a physical environment optimized to promote and accelerate protein folding. The sequence is that of Chaperonin GroEL from Porphyromonas gingivalis (strain ATCC 33277 / DSM 20709 / CIP 103683 / JCM 12257 / NCTC 11834 / 2561).